Consider the following 395-residue polypeptide: MNKDNQIKNESGKQAKILVSEIVNNLKNELGINIEIEEGYSIGYPNQEKQFKMDFLVQFTDFDNEQWLIKSTNSIRERIYGTEFFAQNIRLIDEKVKNIYVVVPDSISSAEMKKKRNYSVKINGTTYTSFLTDVLTVNELRQKIVEKASQNIAQGLRANVLGNDAETSIVNLLNDLKNKALWNDYQNAQQTIKSSTYKIYKEILEKIDLKEGFDKILEVTATNDIPLLSNRGKPKTDVSVTIKTNTKELIRNISIKNTREKTVTIHEGSVSDLISRLKLSETDPLSQALIHFEKVGSKKKLIAEHPNSDKILEENLKLYNRELIEFLHSPLLNDKIQMVDLIIFTNKFAVWNRDDYIKHYIEEYSGKGQFGTPFKWTYPSKKRGQKIQIKGFSNN.

As to quaternary structure, homodimer. Requires Mg(2+) as cofactor.

The enzyme catalyses Endonucleolytic cleavage of DNA to give specific double-stranded fragments with terminal 5'-phosphates.. Its function is as follows. A P subtype restriction enzyme that recognizes the double-stranded sequence 5'-CCGG-3' and cleaves after C-1. The protein is Type II restriction enzyme BsuFI (hsdFR) of Bacillus subtilis.